A 147-amino-acid chain; its full sequence is UPF0178 protein Patl_1318 (147 aa).

This sequence belongs to the UPF0178 family.

The polypeptide is UPF0178 protein Patl_1318 (Pseudoalteromonas atlantica (strain T6c / ATCC BAA-1087)).